The sequence spans 604 residues: Elongation factor 4 (604 aa).

Positions 7-190 (SRLRNFCIIA…IVDRVPAPPD (184 aa)) constitute a tr-type G domain. GTP is bound by residues 19 to 24 (DHGKST) and 136 to 139 (NKID).

The protein belongs to the TRAFAC class translation factor GTPase superfamily. Classic translation factor GTPase family. LepA subfamily.

It localises to the cell inner membrane. The enzyme catalyses GTP + H2O = GDP + phosphate + H(+). In terms of biological role, required for accurate and efficient protein synthesis under certain stress conditions. May act as a fidelity factor of the translation reaction, by catalyzing a one-codon backward translocation of tRNAs on improperly translocated ribosomes. Back-translocation proceeds from a post-translocation (POST) complex to a pre-translocation (PRE) complex, thus giving elongation factor G a second chance to translocate the tRNAs correctly. Binds to ribosomes in a GTP-dependent manner. The polypeptide is Elongation factor 4 (Synechococcus sp. (strain RCC307)).